A 299-amino-acid chain; its full sequence is Taste receptor type 2 member 4 (299 aa).

The Extracellular portion of the chain corresponds to 1–9 (MLRLFYFSA). The helical transmembrane segment at 10–30 (IIASVILNFVGIIMNLFITVV) threads the bilayer. The Cytoplasmic segment spans residues 31–46 (NCKTWVKSHRISSSDR). A helical membrane pass occupies residues 47–67 (ILFSLGITRFLMLGLFLVNTI). Over 68-81 (YFVSSNTERSVYLS) the chain is Extracellular. Residues 82–102 (AFFVLCFMFLDSSSVWFVTLL) form a helical membrane-spanning segment. The Cytoplasmic portion of the chain corresponds to 103-131 (NILYCVKITNFQHSVFLLLKRNISPKIPR). Residues 132–152 (LLLACVLISAFTTCLYITLSQ) traverse the membrane as a helical segment. Over 153-172 (ASPFPELVTTRNNTSFNISE) the chain is Extracellular. Residues Asn164, Asn165, and Asn169 are each glycosylated (N-linked (GlcNAc...) asparagine). The helical transmembrane segment at 173-193 (GILSLVVSLVLSSSLQFIINV) threads the bilayer. Residues 194–230 (TSASLLIHSLRRHIQKMQKNATGFWNPQTEAHVGAMK) are Cytoplasmic-facing. A helical transmembrane segment spans residues 231–251 (LMVYFLILYIPYSVATLVQYL). Residues 252 to 262 (PFYAGMDMGTK) lie on the Extracellular side of the membrane. Residues 263 to 283 (SICLIFATLYSPGHSVLIIIT) traverse the membrane as a helical segment. Residues 284–299 (HPKLKTTAKKILCFKK) lie on the Cytoplasmic side of the membrane.

Belongs to the G-protein coupled receptor T2R family. In terms of tissue distribution, expressed in subsets of taste receptor cells of the tongue and palate epithelium and exclusively in gustducin-positive cells. Expressed on airway ciliated epithelium.

It localises to the membrane. Its subcellular location is the cell projection. The protein resides in the cilium membrane. Its function is as follows. Gustducin-coupled receptor for denatonium and N(6)-propyl-2-thiouracil implicated in the perception of bitter compounds in the oral cavity and the gastrointestinal tract. Signals through PLCB2 and the calcium-regulated cation channel TRPM5. In airway epithelial cells, binding of denatonium increases the intracellular calcium ion concentration and stimulates ciliary beat frequency. The polypeptide is Taste receptor type 2 member 4 (TAS2R4) (Homo sapiens (Human)).